The chain runs to 480 residues: Probable glycosyltransferase 2 (480 aa).

Residues 1–21 show a composition bias toward gly residues; that stretch reads MGQEGMGYNNGKGGGGGGGGL. Residues 1-45 are disordered; that stretch reads MGQEGMGYNNGKGGGGGGGGLPMTAPRPRGASPLSSHGHHHRSRK. The Cytoplasmic segment spans residues 1 to 49; that stretch reads MGQEGMGYNNGKGGGGGGGGLPMTAPRPRGASPLSSHGHHHRSRKIHRT. A helical; Signal-anchor for type II membrane protein transmembrane segment spans residues 50–72; it reads FNNVKITVLCGLVTILVLRGTIG. The Lumenal portion of the chain corresponds to 73–480; sequence LNLSLPNQPT…DVKAKISTTS (408 aa). Asn-74, Asn-124, Asn-129, and Asn-458 each carry an N-linked (GlcNAc...) asparagine glycan.

This sequence belongs to the glycosyltransferase 34 family.

Its subcellular location is the golgi apparatus membrane. Functionally, probable glycosyltransferase that may be involved in the biosynthesis of xyloglucan. The protein is Probable glycosyltransferase 2 of Oryza sativa subsp. indica (Rice).